The primary structure comprises 359 residues: Alanine racemase, biosynthetic (359 aa).

The active-site Proton acceptor; specific for D-alanine is the lysine 34. The residue at position 34 (lysine 34) is an N6-(pyridoxal phosphate)lysine. A substrate-binding site is contributed by arginine 129. Tyrosine 255 acts as the Proton acceptor; specific for L-alanine in catalysis. Methionine 303 serves as a coordination point for substrate.

Belongs to the alanine racemase family. Requires pyridoxal 5'-phosphate as cofactor.

It carries out the reaction L-alanine = D-alanine. Its pathway is amino-acid biosynthesis; D-alanine biosynthesis; D-alanine from L-alanine: step 1/1. It functions in the pathway cell wall biogenesis; peptidoglycan biosynthesis. Functionally, catalyzes the interconversion of L-alanine and D-alanine. Provides the D-alanine required for cell wall biosynthesis. This chain is Alanine racemase, biosynthetic (alr), found in Escherichia coli O157:H7.